The sequence spans 493 residues: Chaperone SurA (493 aa).

Residues 1-33 form the signal peptide; the sequence is MKRQAFSLLSRLNPWQQLLLSAVLVTLAAPAAA. Positions 46-76 are disordered; sequence FTQQGSQSASQGSTVAPSQPMMGVPQPSSQP. Over residues 48–58 the composition is skewed to low complexity; sequence QQGSQSASQGS. 2 consecutive PpiC domains span residues 230–332 and 346–444; these read PTEF…KLVS and IAQT…QVEN.

It localises to the periplasm. It catalyses the reaction [protein]-peptidylproline (omega=180) = [protein]-peptidylproline (omega=0). Its function is as follows. Chaperone involved in the correct folding and assembly of outer membrane proteins. Recognizes specific patterns of aromatic residues and the orientation of their side chains, which are found more frequently in integral outer membrane proteins. May act in both early periplasmic and late outer membrane-associated steps of protein maturation. This is Chaperone SurA from Cupriavidus metallidurans (strain ATCC 43123 / DSM 2839 / NBRC 102507 / CH34) (Ralstonia metallidurans).